Here is a 196-residue protein sequence, read N- to C-terminus: Probable inactive nicotinamidase At3g16190 (196 aa).

The protein belongs to the isochorismatase family.

Does not possess nicotinamidase activity in vitro. In Arabidopsis thaliana (Mouse-ear cress), this protein is Probable inactive nicotinamidase At3g16190.